We begin with the raw amino-acid sequence, 391 residues long: MLADVDYAMAHDGTSILAVNAFKEMEMERVWDPSRIVIPFDHIAPANTETSATLQKEIREWVREQSIPNFYEIGEGICHQVLPENGFALPGKLLVGADSHSCTYGAFGAFATGVGATDMAEIFATGKLWFKVPESFRMTVEGSLDKHVYAKDLTLYLIGKTGIAGATYKAVEFYGQAISELSVAGRMTLCNMAIEMGAKTGIVPPDEKTFDFLKNRAVAPYEPVYSDPDASYLKEFVYDAGDIEPQVACPHQVDNVKPVGEVEGTHVDQVFIGTCTNGRLEDLEVAASVLKGKKVTVRTIIIPASRSTLLAAIKNGTMEILLKAGVTLATPGCGPCLGAHQGVLGEGEVCVSTANRNFKGRMGKDGFIYLASPATAAASALTGEITDPRKI.

[4Fe-4S] cluster is bound by residues cysteine 275, cysteine 333, and cysteine 336.

The protein belongs to the aconitase/IPM isomerase family. LeuC type 2 subfamily. As to quaternary structure, heterotetramer of 2 HacA and 2 HacB proteins.

The catalysed reaction is (2R)-homocitrate = (2R,3S)-homoisocitrate. The enzyme catalyses (2R)-homocitrate = cis-homoaconitate + H2O. It carries out the reaction (2R,3S)-homoisocitrate = cis-homoaconitate + H2O. It catalyses the reaction cis-(homo)2aconitate + H2O = (2R,3S)-iso(homo)2citrate. The catalysed reaction is cis-(homo)3aconitate + H2O = (2R,3S)-iso(homo)3citrate. It participates in organic acid metabolism; 2-oxosuberate biosynthesis. Its function is as follows. Component of a hydro-lyase with broad substrate specificity for cis-unsaturated tricarboxylic acids. Catalyzes both the reversible dehydration of (R)-homocitrate ((R)-2-hydroxybutane-1,2,4-tricarboxylate) to produce cis-homoaconitate ((Z)-but-1-ene-1,2,4-tricarboxylate), and its hydration to homoisocitrate ((1R,2S)-1-hydroxybutane-1,2,4-tricarboxylate). Is also able to hydrate the analogous longer chain substrates cis-homo(2)-aconitate, cis-homo(3)-aconitate. These reactions are part of the biosynthesis pathway of coenzyme B. This Methanosarcina mazei (strain ATCC BAA-159 / DSM 3647 / Goe1 / Go1 / JCM 11833 / OCM 88) (Methanosarcina frisia) protein is Probable methanogen homoaconitase large subunit (hacA).